Reading from the N-terminus, the 255-residue chain is Acid phosphatase 1 (255 aa).

An N-terminal signal peptide occupies residues 1–15; the sequence is MRIFVFLVLLTVAIG. Asn-142 is a glycosylation site (N-linked (GlcNAc...) asparagine).

Belongs to the APS1/VSP family.

The catalysed reaction is a phosphate monoester + H2O = an alcohol + phosphate. The sequence is that of Acid phosphatase 1 (APS1) from Solanum lycopersicum (Tomato).